The primary structure comprises 128 residues: uncharacterized protein (128 aa).

This is an uncharacterized protein from Haemophilus influenzae (strain ATCC 51907 / DSM 11121 / KW20 / Rd).